The chain runs to 163 residues: Cyclic pyranopterin monophosphate synthase (163 aa).

Residues 79-81 (LCH) and 117-118 (ME) contribute to the substrate site. Residue Asp-132 is part of the active site.

The protein belongs to the MoaC family. As to quaternary structure, homohexamer; trimer of dimers.

The catalysed reaction is (8S)-3',8-cyclo-7,8-dihydroguanosine 5'-triphosphate = cyclic pyranopterin phosphate + diphosphate. It functions in the pathway cofactor biosynthesis; molybdopterin biosynthesis. In terms of biological role, catalyzes the conversion of (8S)-3',8-cyclo-7,8-dihydroguanosine 5'-triphosphate to cyclic pyranopterin monophosphate (cPMP). The protein is Cyclic pyranopterin monophosphate synthase of Chloroflexus aurantiacus (strain ATCC 29366 / DSM 635 / J-10-fl).